The chain runs to 218 residues: Probable septum site-determining protein MinC (218 aa).

Belongs to the MinC family. In terms of assembly, interacts with MinD and FtsZ.

Cell division inhibitor that blocks the formation of polar Z ring septums. Rapidly oscillates between the poles of the cell to destabilize FtsZ filaments that have formed before they mature into polar Z rings. Prevents FtsZ polymerization. In Moorella thermoacetica (strain ATCC 39073 / JCM 9320), this protein is Probable septum site-determining protein MinC.